A 192-amino-acid polypeptide reads, in one-letter code: Orotate phosphoribosyltransferase (192 aa).

116-124 (EDIVTTGLS) provides a ligand contact to 5-phospho-alpha-D-ribose 1-diphosphate. Residues Thr120 and Arg148 each contribute to the orotate site.

It belongs to the purine/pyrimidine phosphoribosyltransferase family. PyrE subfamily. As to quaternary structure, homodimer. It depends on Mg(2+) as a cofactor.

It carries out the reaction orotidine 5'-phosphate + diphosphate = orotate + 5-phospho-alpha-D-ribose 1-diphosphate. It functions in the pathway pyrimidine metabolism; UMP biosynthesis via de novo pathway; UMP from orotate: step 1/2. Functionally, catalyzes the transfer of a ribosyl phosphate group from 5-phosphoribose 1-diphosphate to orotate, leading to the formation of orotidine monophosphate (OMP). This Brucella canis (strain ATCC 23365 / NCTC 10854 / RM-666) protein is Orotate phosphoribosyltransferase.